A 213-amino-acid polypeptide reads, in one-letter code: ER lumen protein-retaining receptor erd-2.2 (213 aa).

Residues 1-2 (MN) are Lumenal-facing. The chain crosses the membrane as a helical span at residues 3-21 (IFRISADMSHLLAIIILLL). At 22-35 (KIWKSRSCSGISAR) the chain is on the cytoplasmic side. A helical transmembrane segment spans residues 36–53 (SQILFALVFTARYLDLFS). The Lumenal portion of the chain corresponds to 54–61 (TYISLYNT). Residues 62 to 80 (TMKITFLAATYATVYLMFF) form a helical membrane-spanning segment. Topologically, residues 81–96 (KFRSTYMRESDTFRVE) are cytoplasmic. The helical transmembrane segment at 97-110 (LLIVPAAILALLIN) threads the bilayer. Residues 111–117 (HDFAPFE) are Lumenal-facing. Residues 118–137 (LLWTFSIYLEAVAILPQLFL) form a helical membrane-spanning segment. The Cytoplasmic segment spans residues 138–149 (LQSTGSAEVITA). The chain crosses the membrane as a helical span at residues 150 to 168 (HYLFALGSYRALYIFNWIY). Topologically, residues 169–178 (RYYTEDYFDP) are lumenal. The helical transmembrane segment at 179-199 (IVVVAGIVQTVLYADFFYLYV) threads the bilayer. The Cytoplasmic portion of the chain corresponds to 200–213 (TRVVQTRKGMELPI).

Belongs to the ERD2 family.

It is found in the endoplasmic reticulum membrane. In terms of biological role, required for the retention of luminal endoplasmic reticulum proteins. Determines the specificity of the luminal ER protein retention system. Also required for normal vesicular traffic through the Golgi. This Caenorhabditis elegans protein is ER lumen protein-retaining receptor erd-2.2.